Reading from the N-terminus, the 208-residue chain is Large ribosomal subunit protein uL3 (208 aa).

Residues Arg123–Pro146 form a disordered region.

It belongs to the universal ribosomal protein uL3 family. Part of the 50S ribosomal subunit. Forms a cluster with proteins L14 and L19.

Functionally, one of the primary rRNA binding proteins, it binds directly near the 3'-end of the 23S rRNA, where it nucleates assembly of the 50S subunit. This is Large ribosomal subunit protein uL3 from Streptococcus thermophilus (strain CNRZ 1066).